The chain runs to 463 residues: UDP-N-acetylmuramoylalanine--D-glutamate ligase (463 aa).

An ATP-binding site is contributed by 116–122 (GTNGKTT).

This sequence belongs to the MurCDEF family.

The protein localises to the cytoplasm. It catalyses the reaction UDP-N-acetyl-alpha-D-muramoyl-L-alanine + D-glutamate + ATP = UDP-N-acetyl-alpha-D-muramoyl-L-alanyl-D-glutamate + ADP + phosphate + H(+). Its pathway is cell wall biogenesis; peptidoglycan biosynthesis. In terms of biological role, cell wall formation. Catalyzes the addition of glutamate to the nucleotide precursor UDP-N-acetylmuramoyl-L-alanine (UMA). The polypeptide is UDP-N-acetylmuramoylalanine--D-glutamate ligase (Synechococcus elongatus (strain ATCC 33912 / PCC 7942 / FACHB-805) (Anacystis nidulans R2)).